The sequence spans 373 residues: Forkhead box protein F1 (373 aa).

Residues 1-51 (MTAEIQQPPSQPPAQSSPMSAATDKHGGQPSVMESANCATKTKKTNAGIRR) form a disordered region. Over residues 13 to 22 (PAQSSPMSAA) the composition is skewed to low complexity. Residues 54 to 148 (KPPYSYIALI…EEGSFRRRPR (95 aa)) constitute a DNA-binding region (fork-head). 2 disordered regions span residues 236–255 (GSSGGDYSHHDSGSPLLGGG) and 283–306 (QPLSPCNSAANPLSSSLSSHSLDQ). Residues 286-306 (SPCNSAANPLSSSLSSHSLDQ) are compositionally biased toward low complexity.

The protein resides in the nucleus. Its function is as follows. Probable transcription factor. Required for smooth muscle (visceral mesoderm) differentiation during gut development. Also required for normal proliferation of the lateral plate mesoderm. Acts as a downstream mediator of bmp4-signaling. The sequence is that of Forkhead box protein F1 from Xenopus tropicalis (Western clawed frog).